The following is a 199-amino-acid chain: MKFSPLVDELIQSLKCLPGVGPKSAQRMAFQLLERDRKAGSKLADSLGKAMSEVGHCQSCRTFTEETYCPICVSTKRGHSSVICVVETPADVLAIEAGGHFSGRYFVLLGHLSPLDGVGPDELGLALLETHLASGEVTELILATNPTVEGDATAHYIADMAKNHELAVSRIAHGVPVGGELEYVDSTTLALSFNGRLPI.

A C4-type zinc finger spans residues 57 to 72; that stretch reads CQSCRTFTEETYCPIC. One can recognise a Toprim domain in the interval 81 to 176; the sequence is SVICVVETPA…AVSRIAHGVP (96 aa).

Belongs to the RecR family.

In terms of biological role, may play a role in DNA repair. It seems to be involved in an RecBC-independent recombinational process of DNA repair. It may act with RecF and RecO. The protein is Recombination protein RecR of Shewanella piezotolerans (strain WP3 / JCM 13877).